Here is a 140-residue protein sequence, read N- to C-terminus: Protein archease (140 aa).

Ca(2+)-binding residues include D11, D139, and L140.

It belongs to the archease family.

Functionally, activates the tRNA-splicing ligase complex by facilitating the enzymatic turnover of catalytic subunit RtcB. Acts by promoting the guanylylation of RtcB, a key intermediate step in tRNA ligation. Can also alter the NTP specificity of RtcB such that ATP, dGTP or ITP is used efficiently. This chain is Protein archease, found in Methanopyrus kandleri (strain AV19 / DSM 6324 / JCM 9639 / NBRC 100938).